We begin with the raw amino-acid sequence, 448 residues long: Probable glycine dehydrogenase (decarboxylating) subunit 1 (448 aa).

Belongs to the GcvP family. N-terminal subunit subfamily. The glycine cleavage system is composed of four proteins: P, T, L and H. In this organism, the P 'protein' is a heterodimer of two subunits.

It catalyses the reaction N(6)-[(R)-lipoyl]-L-lysyl-[glycine-cleavage complex H protein] + glycine + H(+) = N(6)-[(R)-S(8)-aminomethyldihydrolipoyl]-L-lysyl-[glycine-cleavage complex H protein] + CO2. In terms of biological role, the glycine cleavage system catalyzes the degradation of glycine. The P protein binds the alpha-amino group of glycine through its pyridoxal phosphate cofactor; CO(2) is released and the remaining methylamine moiety is then transferred to the lipoamide cofactor of the H protein. The sequence is that of Probable glycine dehydrogenase (decarboxylating) subunit 1 from Pyrococcus furiosus (strain ATCC 43587 / DSM 3638 / JCM 8422 / Vc1).